Reading from the N-terminus, the 258-residue chain is Phosphate import ATP-binding protein PstB (258 aa).

Residues 12-253 form the ABC transporter domain; sequence LEVKNLNFYY…PARKETEDYI (242 aa). 44 to 51 contributes to the ATP binding site; sequence GPSGCGKS.

It belongs to the ABC transporter superfamily. Phosphate importer (TC 3.A.1.7) family. As to quaternary structure, the complex is composed of two ATP-binding proteins (PstB), two transmembrane proteins (PstC and PstA) and a solute-binding protein (PstS).

The protein localises to the cell inner membrane. The catalysed reaction is phosphate(out) + ATP + H2O = ADP + 2 phosphate(in) + H(+). Part of the ABC transporter complex PstSACB involved in phosphate import. Responsible for energy coupling to the transport system. This is Phosphate import ATP-binding protein PstB from Bordetella pertussis (strain Tohama I / ATCC BAA-589 / NCTC 13251).